The chain runs to 229 residues: MRIYPAIDLMGGKAVRLYRGQKEKVKVYGDPVEIASRFTELVDKIHVVDLDGAFTGKPQNLDVVKEIIEETGLKVQVGGGFRSYESIAKAYEIGAENVIIGTKAFDLEFLEKITDNFDGITVSLDARGGKIAVKGWLEESSLKVGEAYEMLREYVDRFIYTSIERDGTLTGIESIERFWKDEEFIYAGGVSSVDDVLKLRRVGFSGAIVGKALYESEVSLKELLEVLEC.

Residue D8 is the Proton acceptor of the active site. Residue D125 is the Proton donor of the active site.

The protein belongs to the HisA/HisF family.

The protein resides in the cytoplasm. It catalyses the reaction 1-(5-phospho-beta-D-ribosyl)-5-[(5-phospho-beta-D-ribosylamino)methylideneamino]imidazole-4-carboxamide = 5-[(5-phospho-1-deoxy-D-ribulos-1-ylimino)methylamino]-1-(5-phospho-beta-D-ribosyl)imidazole-4-carboxamide. It participates in amino-acid biosynthesis; L-histidine biosynthesis; L-histidine from 5-phospho-alpha-D-ribose 1-diphosphate: step 4/9. This is 1-(5-phosphoribosyl)-5-[(5-phosphoribosylamino)methylideneamino] imidazole-4-carboxamide isomerase from Thermococcus onnurineus (strain NA1).